The primary structure comprises 279 residues: MSVQIRKRGRPRGRAGGLGAEDSGGIRALDRALDILDLIAVSSGLTLTEIAQRLDMAPSTVHRVLVTLAARGVAESDSQTQAWHVGPTAFRHGSAFMRRSGLVERARPLLRRLMEVTGETANLGILNGDAVLFLSQAETHETIRAFFPPGTRSALHASGIGKALLAHARPLDLKRMLREMRLERFTDMTLTDPAALVEDLVQIRARGYALDNEERTPGMRCIAAPIFDLAGEAAAGISVSGPTLRMSDARLSAMSDAVIEAARELSFGMAPRKDAGERA.

Residues 1–13 (MSVQIRKRGRPRG) show a composition bias toward basic residues. The disordered stretch occupies residues 1–21 (MSVQIRKRGRPRGRAGGLGAE). The 62-residue stretch at 26–87 (IRALDRALDI…SQTQAWHVGP (62 aa)) folds into the HTH iclR-type domain. The segment at residues 47-66 (LTEIAQRLDMAPSTVHRVLV) is a DNA-binding region (H-T-H motif). Residues 102–271 (LVERARPLLR…ARELSFGMAP (170 aa)) enclose the IclR-ED domain.

Functionally, transcriptional regulator of the bhc gene cluster involved in glycolate and glyoxylate assimilation via the beta-hydroxyaspartate cycle (BHAC). Glyoxylate negatively affects the interaction of BhcR with the promoter region of the bhc gene cluster. The chain is HTH-type transcriptional regulator BhcR from Paracoccus denitrificans (strain Pd 1222).